The primary structure comprises 245 residues: Spore membrane assembly protein 1 (245 aa).

Involved in spore and ascus formation. Required for the efficient assembly of the precursors of the prospore membrane to a continuous prospore membrane. This Saccharomyces cerevisiae (strain ATCC 204508 / S288c) (Baker's yeast) protein is Spore membrane assembly protein 1 (SMA1).